The following is a 185-amino-acid chain: Anaphase-promoting complex subunit 10 (185 aa).

T2 is modified (N-acetylthreonine). The DOC domain occupies 2–185 (TTPNKTPPGA…IDFMMYRSIR (184 aa)). N6-acetyllysine is present on K169.

It belongs to the APC10 family. In terms of assembly, the mammalian APC/C is composed at least of 14 distinct subunits ANAPC1, ANAPC2, CDC27/APC3, ANAPC4, ANAPC5, CDC16/APC6, ANAPC7, CDC23/APC8, ANAPC10, ANAPC11, CDC26/APC12, ANAPC13, ANAPC15 and ANAPC16 that assemble into a complex of at least 19 chains with a combined molecular mass of around 1.2 MDa; APC/C interacts with FZR1 and FBXO5. The C-terminus of APC10 binds to CDC27/APC3. Interacts with PIWIL1; interaction only takes place when PIWIL1 binds piRNA. Interacts with FBXO43; the interaction is direct.

It functions in the pathway protein modification; protein ubiquitination. Its function is as follows. Component of the anaphase promoting complex/cyclosome (APC/C), a cell cycle-regulated E3 ubiquitin ligase that controls progression through mitosis and the G1 phase of the cell cycle. The APC/C complex acts by mediating ubiquitination and subsequent degradation of target proteins: it mainly mediates the formation of 'Lys-11'-linked polyubiquitin chains and, to a lower extent, the formation of 'Lys-48'- and 'Lys-63'-linked polyubiquitin chains. The APC/C complex catalyzes assembly of branched 'Lys-11'-/'Lys-48'-linked branched ubiquitin chains on target proteins. This chain is Anaphase-promoting complex subunit 10 (ANAPC10), found in Bos taurus (Bovine).